The sequence spans 300 residues: MEVGGRKRGKPDGANGAGGKRARESESFQTGVGSKSKPCTKFFSTSGCPFGEGCHFLHHFPGGYQAVAKMTNLGGPAIAPPPGRMPMGNAVPDGPPTPTVKTRLCNKYNTAEGCKWGDKCHFAHGERELGKPMLMDSSMPPPMGPRPTGHFAPPPMPSPAMSTPASFGASATAKISVDASLAGGIIGRGGVNTKQISRVTGAKLAIRDHESDTNLKNIELEGTFDQIKNASAMVRELIVSIGGGAPPQGKKPVGGSHRGGGPGSNFKTKLCENFTKGSCTFGDRCHFAHGENELRKSAAA.

The segment at 1–38 (MEVGGRKRGKPDGANGAGGKRARESESFQTGVGSKSKP) is disordered. C3H1-type zinc fingers lie at residues 33–61 (GSKSKPCTKFFSTSGCPFGEGCHFLHHFP) and 99–127 (TVKTRLCNKYNTAEGCKWGDKCHFAHGER). Positions 170–234 (SATAKISVDA…DQIKNASAMV (65 aa)) constitute a KH domain. The interval 243–262 (GGAPPQGKKPVGGSHRGGGP) is disordered. A C3H1-type 3 zinc finger spans residues 265–292 (NFKTKLCENFTKGSCTFGDRCHFAHGEN).

The protein is Zinc finger CCCH domain-containing protein 14 of Oryza sativa subsp. japonica (Rice).